The primary structure comprises 467 residues: MAQHFSLGACDVVGFDLDHTLCRYNLPESARLIYNSFAQFLVKEKGYDEGLLTLTPEDWDFCCKGLALDLEDGTFIKLAADGTVLRASHGTKMMTPEALTEAFGKKEWRHCVSDKRCTSDKPGVSDIPCCSGKCYFYDNYFDLPGALLCARVVDSLTKQNRGQKTFDFWKDVVAGIQHNFKMSAFKENCGFFFPEIKRNLGKYVHRCPESVRKWLRQLKDAGKITMLITSSHSDYCKLLGSYILGEDFADLFDIVITNALKPGFFSHFPSQRPFYTLENDEEKDELPSLDKPGWYSQGNAAHLYELLKKMTSKPEPKVVYFGDSMHSDIFPAHHYTNWETVLILEELQGPEMEKPEEAEPLEKRGKYEAPMVKPLNTLSNKWGSYFIDSVSGRGRAEDSVVYTWSSKRISTYSTIAIPNIESIAELPLDYKFTRFSTNNSKMAGYYPLVHHTLGSQDTDSKIISTEK.

D16 functions as the Nucleophile in the catalytic mechanism. Mg(2+)-binding residues include D16 and D18. D18 acts as the Proton donor in catalysis. K181 is modified (N6-acetyllysine). D323 contacts Mg(2+).

Belongs to the 5'(3')-deoxyribonucleotidase family.

The chain is 5'-nucleotidase domain-containing protein 1 (Nt5dc1) from Mus musculus (Mouse).